The chain runs to 586 residues: Malonate--CoA ligase ACSF3, mitochondrial (586 aa).

The N-terminal 89 residues, 1–89 (MPLPYVGMAL…SREICQLRAC (89 aa)), are a transit peptide targeting the mitochondrion. ATP is bound by residues 203–211 (TSGTTGRPK), Asp-457, Arg-471, and Lys-563.

The protein belongs to the ATP-dependent AMP-binding enzyme family.

The protein resides in the mitochondrion. It carries out the reaction tetracosanoate + ATP + CoA = tetracosanoyl-CoA + AMP + diphosphate. The enzyme catalyses malonate + ATP + CoA = malonyl-CoA + AMP + diphosphate. In terms of biological role, catalyzes the initial reaction in intramitochondrial fatty acid synthesis, by activating malonate and methylmalonate, but not acetate, into their respective CoA thioester. May have some preference toward very-long-chain substrates. The chain is Malonate--CoA ligase ACSF3, mitochondrial from Bos taurus (Bovine).